The primary structure comprises 88 residues: Phage-like element PBSX protein XkdR (88 aa).

This sequence to B.subtilis YqbR.

The polypeptide is Phage-like element PBSX protein XkdR (xkdR) (Bacillus subtilis (strain 168)).